Consider the following 161-residue polypeptide: ATP synthase subunit b 2 (161 aa).

A helical transmembrane segment spans residues 13 to 33 (IVWLVIALVAMYFVMSRLAIP).

It belongs to the ATPase B chain family. In terms of assembly, F-type ATPases have 2 components, F(1) - the catalytic core - and F(0) - the membrane proton channel. F(1) has five subunits: alpha(3), beta(3), gamma(1), delta(1), epsilon(1). F(0) has three main subunits: a(1), b(2) and c(10-14). The alpha and beta chains form an alternating ring which encloses part of the gamma chain. F(1) is attached to F(0) by a central stalk formed by the gamma and epsilon chains, while a peripheral stalk is formed by the delta and b chains.

The protein localises to the cell inner membrane. Its function is as follows. F(1)F(0) ATP synthase produces ATP from ADP in the presence of a proton or sodium gradient. F-type ATPases consist of two structural domains, F(1) containing the extramembraneous catalytic core and F(0) containing the membrane proton channel, linked together by a central stalk and a peripheral stalk. During catalysis, ATP synthesis in the catalytic domain of F(1) is coupled via a rotary mechanism of the central stalk subunits to proton translocation. Functionally, component of the F(0) channel, it forms part of the peripheral stalk, linking F(1) to F(0). The b'-subunit is a diverged and duplicated form of b found in plants and photosynthetic bacteria. The chain is ATP synthase subunit b 2 (atpF2) from Rhodospirillum rubrum (strain ATCC 11170 / ATH 1.1.1 / DSM 467 / LMG 4362 / NCIMB 8255 / S1).